The following is a 9518-amino-acid chain: Nonribosomal peptide synthetase ungA' (9518 aa).

An adenylation 1 region spans residues 214–611; it reads ERARETPNAP…ARKDDQVKVR (398 aa). Residues 738–814 form the Carrier 1 domain; sequence APRTEMEWRL…DLAEVARLEQ (77 aa). O-(pantetheine 4'-phosphoryl)serine is present on S775. Positions 853-1250 are condensation 1; it reads DLLPCSPLQE…EEVLRQISRE (398 aa). The segment at 1292–1695 is adenylation 2; sequence QRVQEQPDRP…GRKDTQVKIR (404 aa). The region spanning 1822-1898 is the Carrier 2 domain; that stretch reads LPQTELERRL…RLAHCSQTEQ (77 aa). An O-(pantetheine 4'-phosphoryl)serine modification is found at S1859. The tract at residues 1911–2336 is epimerization 1; the sequence is TFALSPIQQL…QRSLEVVAKE (426 aa). Positions 2376–2803 are condensation 2; sequence EDIYPCSPVQ…DNLQIASSQD (428 aa). Residues 2829–3224 form an adenylation 3 region; the sequence is RIQQQPEAPA…NRKDNQVKIR (396 aa). Residues 3352-3428 enclose the Carrier 3 domain; that stretch reads APATASEQRL…DMAQTLKVES (77 aa). Position 3389 is an O-(pantetheine 4'-phosphoryl)serine (S3389). Residues 3465–3869 are condensation 3; it reads EDVLPCTPLQ…QVCKEASQYL (405 aa). The interval 3906–4307 is adenylation 4; it reads QQAHQRPNAS…GRRDAQVKIR (402 aa). The Carrier 4 domain occupies 4436–4512; it reads TPTTITECRI…RLAACTTPVD (77 aa). S4473 carries the post-translational modification O-(pantetheine 4'-phosphoryl)serine. Positions 4527–4954 are epimerization 2; the sequence is ALSPIQQLFV…EDAAQELPSL (428 aa). The interval 4990-5411 is condensation 4; sequence VEDIYPCSPI…ANLISKEDLR (422 aa). An adenylation 5 region spans residues 5433–5829; sequence SEQAQNQPDA…GRKDGQVKIR (397 aa). The 77-residue stretch at 5957-6033 folds into the Carrier 5 domain; the sequence is VASSPVELAL…QLAKNSGLQA (77 aa). An O-(pantetheine 4'-phosphoryl)serine modification is found at S5994. Residues 6050-6470 are epimerization 3; that stretch reads ELSPIQRMFF…CEHSLVMAAH (421 aa). Residues 6512–6856 are condensation 5; the sequence is VEDIYPCTPI…TGISVQNNAS (345 aa). The segment at 6947–7338 is adenylation 6; the sequence is LRPNSSAIHA…GRKDSQVKVR (392 aa). The Carrier 6 domain occupies 7464–7540; the sequence is LPRTEVEMQL…GLAPSAASQA (77 aa). An O-(pantetheine 4'-phosphoryl)serine modification is found at S7501. Residues 7555-7978 form an epimerization 4 region; sequence ELSPIQQMFI…LQTAARELPH (424 aa). Residues 8016–8444 are condensation 6; the sequence is VEDIYPLTPI…QVDLAGRHDQ (429 aa). The interval 8468–8867 is adenylation 7; the sequence is MQCQQRPDAT…SRKDAQVKIR (400 aa). Residues 8995 to 9071 enclose the Carrier 7 domain; the sequence is PLTTEMEWRL…DMAHYLREGQ (77 aa). At S9032 the chain carries O-(pantetheine 4'-phosphoryl)serine. The condensation 7 stretch occupies residues 9111–9454; sequence DVYPTTELQD…DNLEHDAGTS (344 aa).

The protein belongs to the NRP synthetase family.

It participates in secondary metabolite biosynthesis. Its function is as follows. Nonribosomal peptide synthetase; part of the gene cluster that mediates the biosynthesis of the unguisins, gamma-aminobutyric acid (GABA)-containing fungal cyclic heptapeptides with the amino acid sequence cyclo-(D-Ala1-D-Val2-L-Leu3-beta-MePhe4-D-Ala5-D-Trp6-GABA7) for unguisin H and cyclo-(D-Ala1-D-Ala2-L-Leu3-beta-MePhe4-D-Ala5-D-Trp6-GABA7) for unguisin I. UngA' is the main enzyme within the cluster which condenses the 7 residues using its respective 7 modules. The terminal condensation domain (Ct) is involved in cyclization with D-alanine and thereby releasing of unguisins H and I. The alanine racemase ungC' provides D-alanine, which is then accepted by the first adenylation domain of ungA', whereas the methyltransferase ungE' provides the (2R,3R)-beta-methylphenylalanine residue incorporated by the module 4. Finally, the hydrolase ungD' catalyzes the hydrolysis between the D-tryptophan and GABA residues of unguisins H and I to produce the corresponding linear peptides. The protein is Nonribosomal peptide synthetase ungA' of Aspergillus campestris (strain IBT 28561).